The chain runs to 318 residues: Tyrosine recombinase XerD (318 aa).

The 86-residue stretch at 5-90 folds into the Core-binding (CB) domain; the sequence is PSDAKLTGLF…AMRHLYRFLL (86 aa). Residues 111–310 enclose the Tyr recombinase domain; sequence GLPKVLSIAD…VEERLKSLVR (200 aa). Active-site residues include Arg-161, Lys-185, His-262, Arg-265, and His-288. Tyr-297 serves as the catalytic O-(3'-phospho-DNA)-tyrosine intermediate.

Belongs to the 'phage' integrase family. XerD subfamily. As to quaternary structure, forms a cyclic heterotetrameric complex composed of two molecules of XerC and two molecules of XerD.

The protein resides in the cytoplasm. Site-specific tyrosine recombinase, which acts by catalyzing the cutting and rejoining of the recombining DNA molecules. The XerC-XerD complex is essential to convert dimers of the bacterial chromosome into monomers to permit their segregation at cell division. It also contributes to the segregational stability of plasmids. The polypeptide is Tyrosine recombinase XerD (Bradyrhizobium diazoefficiens (strain JCM 10833 / BCRC 13528 / IAM 13628 / NBRC 14792 / USDA 110)).